The sequence spans 267 residues: Flap endonuclease Xni (267 aa).

Residue Asp115 participates in Mg(2+) binding. The region spanning 171 to 261 (VAPAQLVDFW…LGFNLREIRY (91 aa)) is the 5'-3' exonuclease domain. 3 residues coordinate K(+): Leu182, Val193, and Ile196. An interaction with DNA region spans residues 195 to 200 (GIGPKT).

This sequence belongs to the Xni family. Requires Mg(2+) as cofactor. K(+) serves as cofactor.

Has flap endonuclease activity. During DNA replication, flap endonucleases cleave the 5'-overhanging flap structure that is generated by displacement synthesis when DNA polymerase encounters the 5'-end of a downstream Okazaki fragment. The sequence is that of Flap endonuclease Xni from Aeromonas hydrophila subsp. hydrophila (strain ATCC 7966 / DSM 30187 / BCRC 13018 / CCUG 14551 / JCM 1027 / KCTC 2358 / NCIMB 9240 / NCTC 8049).